The sequence spans 535 residues: MGNCCGNPSSATNQSKQGKPKNKNNPFYSNEYATTDRSGAGFKLSVLKDPTGHDISLQYDLGREVGRGEFGITYLCTDKETGEKYACKSISKKKLRTAVDIEDVRREVEIMKHMPKHPNVVSLKDSFEDDDAVHIVMELCEGGELFDRIVARGHYTERAAAAVMKTIVEVVQICHKQGVMHRDLKPENFLFANKKETSALKAIDFGLSVFFKPGEQFNEIVGSPYYMAPEVLRRNYGPEIDVWSAGVILYILLCGVPPFWAETEQGVAQAIIRSVIDFKRDPWPRVSDSAKDLVRKMLEPDPKKRLTAAQVLEHTWILNAKKAPNVSLGETVKARLKQFSVMNKLKKRALRVIAEHLSVEEAAGIKEAFEMMDVNKRGKINLEELKYGLQKAGQQIADTDLQILMEATDVDGDGTLNYSEFVAVSVHLKKMANDEHLHKAFNFFDQNQSGYIEIDELREALNDELDNTSSEEVIAAIMQDVDTDKDGRISYEEFVAMMKAGTDWRKASRQYSRERFNSLSLKLMRDGSLQLEGET.

The segment at 1-29 (MGNCCGNPSSATNQSKQGKPKNKNNPFYS) is disordered. A lipid anchor (N-myristoyl glycine) is attached at G2. In terms of domain architecture, Protein kinase spans 59–317 (YDLGREVGRG…AAQVLEHTWI (259 aa)). ATP is bound by residues 65-73 (VGRGEFGIT) and K88. D183 acts as the Proton acceptor in catalysis. S223 is modified (phosphoserine). The autoinhibitory domain stretch occupies residues 323–353 (APNVSLGETVKARLKQFSVMNKLKKRALRVI). 4 consecutive EF-hand domains span residues 360-395 (EEAA…AGQQ), 396-431 (IADT…LKKM), 432-467 (ANDE…ELDN), and 468-504 (TSSE…GTDW). Ca(2+) is bound by residues D373, N375, K379, E384, D409, D411, D413, T415, E420, D445, N447, S449, Y451, E456, D482, D484, D486, and R488. A Phosphoserine modification is found at S490. E493 contributes to the Ca(2+) binding site.

Belongs to the protein kinase superfamily. Ser/Thr protein kinase family. CDPK subfamily.

Its subcellular location is the cell membrane. The catalysed reaction is L-seryl-[protein] + ATP = O-phospho-L-seryl-[protein] + ADP + H(+). It carries out the reaction L-threonyl-[protein] + ATP = O-phospho-L-threonyl-[protein] + ADP + H(+). Activated by calcium. Autophosphorylation may play an important role in the regulation of the kinase activity. Functionally, may play a role in signal transduction pathways that involve calcium as a second messenger. This is Calcium-dependent protein kinase 7 (CPK7) from Arabidopsis thaliana (Mouse-ear cress).